The following is a 377-amino-acid chain: Dihydroorotate dehydrogenase (quinone) (377 aa).

FMN-binding positions include 78–82 (AGCDK) and Ala-102. Lys-82 is a substrate binding site. Residue 127–130 (NRLG) participates in substrate binding. Residues Asn-159 and Asn-192 each coordinate FMN. Substrate is bound at residue Asn-192. Catalysis depends on Ser-195, which acts as the Nucleophile. Position 197 (Asn-197) interacts with substrate. The FMN site is built by Lys-230 and Thr-258. 259–260 (NT) is a substrate binding site. FMN-binding positions include Gly-288, Gly-317, and 338–339 (YT).

Belongs to the dihydroorotate dehydrogenase family. Type 2 subfamily. Monomer. It depends on FMN as a cofactor.

It localises to the cell membrane. The enzyme catalyses (S)-dihydroorotate + a quinone = orotate + a quinol. The protein operates within pyrimidine metabolism; UMP biosynthesis via de novo pathway; orotate from (S)-dihydroorotate (quinone route): step 1/1. In terms of biological role, catalyzes the conversion of dihydroorotate to orotate with quinone as electron acceptor. This Rippkaea orientalis (strain PCC 8801 / RF-1) (Cyanothece sp. (strain PCC 8801)) protein is Dihydroorotate dehydrogenase (quinone).